The following is a 205-amino-acid chain: GTP cyclohydrolase-2 (205 aa).

A GTP-binding site is contributed by 49–53; sequence RIHSE. Residues cysteine 54, cysteine 65, and cysteine 67 each coordinate Zn(2+). Residues glutamine 70, 92-94, and threonine 114 contribute to the GTP site; that span reads EGR. The Proton acceptor role is filled by aspartate 126. Arginine 128 serves as the catalytic Nucleophile. Threonine 149 and lysine 154 together coordinate GTP.

Belongs to the GTP cyclohydrolase II family. Zn(2+) serves as cofactor.

It catalyses the reaction GTP + 4 H2O = 2,5-diamino-6-hydroxy-4-(5-phosphoribosylamino)-pyrimidine + formate + 2 phosphate + 3 H(+). The protein operates within cofactor biosynthesis; riboflavin biosynthesis; 5-amino-6-(D-ribitylamino)uracil from GTP: step 1/4. Its function is as follows. Catalyzes the conversion of GTP to 2,5-diamino-6-ribosylamino-4(3H)-pyrimidinone 5'-phosphate (DARP), formate and pyrophosphate. In Shewanella piezotolerans (strain WP3 / JCM 13877), this protein is GTP cyclohydrolase-2.